The sequence spans 127 residues: MNTPKELRYSEEHEWVRVEGDKVRIGITDFAQSELGDIVFVELPEVGAEITANEPFGSVESVKTVSELYAPISGKVVEVNEELNDNPEYVNESPYEKAWMIVVEPYDMSEIDNLLTAEQYEEMVKEG.

The 83-residue stretch at 22 to 104 (KVRIGITDFA…YEKAWMIVVE (83 aa)) folds into the Lipoyl-binding domain. An N6-lipoyllysine modification is found at K63.

Belongs to the GcvH family. As to quaternary structure, the glycine cleavage system is composed of four proteins: P, T, L and H. Requires (R)-lipoate as cofactor.

In terms of biological role, the glycine cleavage system catalyzes the degradation of glycine. The H protein shuttles the methylamine group of glycine from the P protein to the T protein. Is also involved in protein lipoylation via its role as an octanoyl/lipoyl carrier protein intermediate. In Geobacillus sp. (strain WCH70), this protein is Glycine cleavage system H protein.